The sequence spans 382 residues: Anhydro-N-acetylmuramic acid kinase (382 aa).

An ATP-binding site is contributed by 9–16 (GTSLDGID).

The protein belongs to the anhydro-N-acetylmuramic acid kinase family.

It carries out the reaction 1,6-anhydro-N-acetyl-beta-muramate + ATP + H2O = N-acetyl-D-muramate 6-phosphate + ADP + H(+). The protein operates within amino-sugar metabolism; 1,6-anhydro-N-acetylmuramate degradation. It functions in the pathway cell wall biogenesis; peptidoglycan recycling. Functionally, catalyzes the specific phosphorylation of 1,6-anhydro-N-acetylmuramic acid (anhMurNAc) with the simultaneous cleavage of the 1,6-anhydro ring, generating MurNAc-6-P. Is required for the utilization of anhMurNAc either imported from the medium or derived from its own cell wall murein, and thus plays a role in cell wall recycling. The protein is Anhydro-N-acetylmuramic acid kinase of Bacillus anthracis (strain A0248).